A 415-amino-acid polypeptide reads, in one-letter code: Esterase FrsA (415 aa).

This sequence belongs to the FrsA family.

It carries out the reaction a carboxylic ester + H2O = an alcohol + a carboxylate + H(+). Functionally, catalyzes the hydrolysis of esters. The sequence is that of Esterase FrsA from Yersinia enterocolitica serotype O:8 / biotype 1B (strain NCTC 13174 / 8081).